An 82-amino-acid polypeptide reads, in one-letter code: Large ribosomal subunit protein uL23 (82 aa).

The protein belongs to the universal ribosomal protein uL23 family. In terms of assembly, part of the 50S ribosomal subunit. Contacts protein L29.

Binds to 23S rRNA. One of the proteins that surrounds the polypeptide exit tunnel on the outside of the ribosome. This Methanospirillum hungatei JF-1 (strain ATCC 27890 / DSM 864 / NBRC 100397 / JF-1) protein is Large ribosomal subunit protein uL23.